A 270-amino-acid chain; its full sequence is Cbp/p300-interacting transactivator 2 (270 aa).

A disordered region spans residues 138–201 (LHPAAGHQMN…SGGGSGSGNM (64 aa)). A compositionally biased stretch (gly residues) spans 165–198 (STPGGSGGSSTPGGSGSSSGGGAGSSNSGGGSGS).

This sequence belongs to the CITED family. As to quaternary structure, interacts (via C-terminus) with SMAD2. Interacts (via C-terminus) with SMAD3 (via MH2 domain). Interacts with LHX2 (via LIM domains). Interacts with WT1. Interacts (via C-terminus) with EP300 (via CH1 domain); the interaction is stimulated in response to hypoxia. Interacts with PPARA. Interacts (via C-terminus) with TFAP2A, TFAP2B and TFAP2C.

It localises to the nucleus. Functionally, transcriptional coactivator of the p300/CBP-mediated transcription complex. Acts as a bridge, linking TFAP2 transcription factors and the p300/CBP transcriptional coactivator complex in order to stimulate TFAP2-mediated transcriptional activation. Positively regulates TGF-beta signaling through its association with the SMAD/p300/CBP-mediated transcriptional coactivator complex. Stimulates the peroxisome proliferator-activated receptors PPARA transcriptional activity. Enhances estrogen-dependent transactivation mediated by estrogen receptors. Also acts as a transcriptional corepressor; interferes with the binding of the transcription factors HIF1A or STAT2 and the p300/CBP transcriptional coactivator complex. Participates in sex determination and early gonad development by stimulating transcription activation of SRY. Plays a role in controlling left-right patterning during embryogenesis; potentiates transcriptional activation of NODAL-mediated gene transcription in the left lateral plate mesoderm (LPM). Plays an essential role in differentiation of the adrenal cortex from the adrenogonadal primordium (AGP); stimulates WT1-mediated transcription activation thereby up-regulating the nuclear hormone receptor NR5A1 promoter activity. Associates with chromatin to the PITX2 P1 promoter region. This is Cbp/p300-interacting transactivator 2 (CITED2) from Homo sapiens (Human).